The chain runs to 208 residues: MVSGRIETLLAQLRLQGIDDERLLKAIGDVPRERFIDEAFEHKAWENTALPIGCGQTISQPYMVAKMTSLLALTPTSRVLEIGTGSGYQTAILAHLVGHVCSVERIKGLQWQAKRRLKQLDLHNVSTRHGDGWLGWPARGPYDAIIVTAAPPNIPDALMSQLDDGGVMVLPVGEDQQVLQRIRRTADEFIVDTIEPVRFVPLVKGDLA.

Serine 59 is an active-site residue.

This sequence belongs to the methyltransferase superfamily. L-isoaspartyl/D-aspartyl protein methyltransferase family.

The protein resides in the cytoplasm. The enzyme catalyses [protein]-L-isoaspartate + S-adenosyl-L-methionine = [protein]-L-isoaspartate alpha-methyl ester + S-adenosyl-L-homocysteine. In terms of biological role, catalyzes the methyl esterification of L-isoaspartyl residues in peptides and proteins that result from spontaneous decomposition of normal L-aspartyl and L-asparaginyl residues. It plays a role in the repair and/or degradation of damaged proteins. The protein is Protein-L-isoaspartate O-methyltransferase of Erwinia tasmaniensis (strain DSM 17950 / CFBP 7177 / CIP 109463 / NCPPB 4357 / Et1/99).